A 606-amino-acid polypeptide reads, in one-letter code: Sodium-independent sulfate anion transporter (606 aa).

Residues 1–51 lie on the Extracellular side of the membrane; sequence MPSSVTALGQARSSGPGMAPSACCCSPAALQRRLPILAWLPSYSLQWLKMD. The chain crosses the membrane as a helical span at residues 52 to 72; it reads FVAGLSVGLTAIPQALAYAEV. Ala-73 is a topological domain (cytoplasmic). Residues 74–94 traverse the membrane as a helical segment; it reads GLPPQYGLYSAFMGCFVYFFL. The Extracellular portion of the chain corresponds to 95–100; sequence GTSRDV. Residues 101–117 form a helical membrane-spanning segment; the sequence is TLGPTAIMSLLVSFYTF. At 118-119 the chain is on the cytoplasmic side; the sequence is HE. The helical transmembrane segment at 120 to 140 threads the bilayer; it reads PAYAVLLAFLSGCIQLAMGVL. Residues 141–147 lie on the Extracellular side of the membrane; the sequence is RLGFLLD. Residues 148 to 168 form a helical membrane-spanning segment; that stretch reads FISYPVIKGFTSAAAVTIGFG. The Cytoplasmic segment spans residues 169 to 197; sequence QIKNLLGLQNIPRPFFLQVYHTFLRIAET. Residues 198-218 form a helical membrane-spanning segment; that stretch reads RVGDAVLGLVCMLLLLVLKLM. Residues 219 to 250 are Extracellular-facing; the sequence is RDHVPPVHPEMPPGVRLSRGLVWAATTARNAL. Residues 251-271 traverse the membrane as a helical segment; sequence VVSFAALVAYSFEVTGYQPFI. The Cytoplasmic segment spans residues 272-307; sequence LTGETAEGLPPVRIPPFSVTTANGTISFTEMVQDMG. The chain crosses the membrane as a helical span at residues 308–328; the sequence is AGLAVVPLMGLLESIAVAKAF. Over 329–341 the chain is Extracellular; it reads ASQNNYRIDANQE. A helical transmembrane segment spans residues 342–362; that stretch reads LLAIGLTNMLGSLVSSYPVTG. The Cytoplasmic segment spans residues 363-374; it reads SFGRTAVNAQSG. A helical transmembrane segment spans residues 375–395; it reads VCTPAGGLVTGVLVLLSLDYL. At 396–398 the chain is on the extracellular side; the sequence is TSL. A helical membrane pass occupies residues 399–419; sequence FYYIPKSALAAVIIMAVAPLF. Topologically, residues 420-441 are cytoplasmic; it reads DTKIFRTLWRVKRLDLLPLCVT. A helical transmembrane segment spans residues 442 to 462; sequence FLLCFWEVQYGILAGALVSLL. At 463-606 the chain is on the extracellular side; sequence MLLHSAARPE…LDQKVALLKA (144 aa). The STAS domain occupies 470-584; sequence RPETKVSEGP…EAEKHLRQEP (115 aa).

It belongs to the SLC26A/SulP transporter (TC 2.A.53) family. As to expression, detected in all tissues tested with highest expression observed in brain, kidney, HEVEC and placenta and lowest in pancreas, skeletal muscle, liver, lung and heart.

It localises to the cell membrane. It is found in the lysosome membrane. The protein resides in the apical cell membrane. Its subcellular location is the basolateral cell membrane. It carries out the reaction hydrogencarbonate(in) + chloride(out) = hydrogencarbonate(out) + chloride(in). The catalysed reaction is sulfate(in) + H(+)(in) = sulfate(out) + H(+)(out). The enzyme catalyses oxalate(in) + chloride(out) = oxalate(out) + chloride(in). In terms of biological role, sodium-independent anion exchanger mediating bicarbonate, chloride, sulfate and oxalate transport. Exhibits sodium-independent sulfate anion transporter activity that may cooperate with SLC26A2 to mediate DIDS-sensitive sulfate uptake into high endothelial venules endothelial cells (HEVEC). In the kidney, mediates chloride-bicarbonate exchange, facilitating V-ATPase-mediated acid secretion. May function as a chloride channel, playing an important role in moderating chloride homeostasis and neuronal activity in the cerebellum. The chain is Sodium-independent sulfate anion transporter from Homo sapiens (Human).